We begin with the raw amino-acid sequence, 418 residues long: Histidine--tRNA ligase (418 aa).

Belongs to the class-II aminoacyl-tRNA synthetase family. Homodimer.

It is found in the cytoplasm. The enzyme catalyses tRNA(His) + L-histidine + ATP = L-histidyl-tRNA(His) + AMP + diphosphate + H(+). The polypeptide is Histidine--tRNA ligase (Dehalococcoides mccartyi (strain ATCC BAA-2100 / JCM 16839 / KCTC 5957 / BAV1)).